The sequence spans 106 residues: CLAVATA3/ESR (CLE)-related protein 21 (106 aa).

The N-terminal stretch at 1-31 (MLILSSRYAMKRDVLIIVIFTVLVLIIISRS) is a signal peptide. The N-linked (GlcNAc...) asparagine glycan is linked to Asn47. Residues 72-82 (KVRRRSSRFRR) are compositionally biased toward basic residues. Positions 72 to 106 (KVRRRSSRFRRKTDGDEEEEEKRSIPTGPNPLHNK) are disordered. Hydroxyproline occurs at positions 97 and 100. O-linked (Ara...) hydroxyproline glycosylation is present at Pro100.

The protein belongs to the CLV3/ESR signal peptide family. The O-glycosylation (arabinosylation) of the hydroxyproline Pro-100 enhances binding affinity of the CLE21p peptide for its receptor. In terms of tissue distribution, mostly expressed in leaves and apex, and, to a lower extent, in seedlings, flowers, stems and siliques.

It localises to the secreted. The protein resides in the extracellular space. Extracellular signal peptide that regulates cell fate. Represses root apical meristem maintenance. Regulates the transition of protophloem cells from proliferation to differentiation, thus impinging on postembryonic growth capacity of the root meristem; this signaling pathway requires CRN and CLV2. The protein is CLAVATA3/ESR (CLE)-related protein 21 of Arabidopsis thaliana (Mouse-ear cress).